Reading from the N-terminus, the 462-residue chain is UDP-N-acetylmuramate--L-alanine ligase (462 aa).

114–120 (GSHGKTT) is an ATP binding site.

The protein belongs to the MurCDEF family.

It localises to the cytoplasm. The enzyme catalyses UDP-N-acetyl-alpha-D-muramate + L-alanine + ATP = UDP-N-acetyl-alpha-D-muramoyl-L-alanine + ADP + phosphate + H(+). The protein operates within cell wall biogenesis; peptidoglycan biosynthesis. Its function is as follows. Cell wall formation. The polypeptide is UDP-N-acetylmuramate--L-alanine ligase (Brachyspira hyodysenteriae (strain ATCC 49526 / WA1)).